Consider the following 648-residue polypeptide: RAF proto-oncogene serine/threonine-protein kinase (648 aa).

Residue Ser29 is modified to Phosphoserine; by MAPK1. Phosphoserine is present on Ser43. Positions 56–131 (NTIRVFLPNK…IGEELQVDFL (76 aa)) constitute an RBD domain. The Phorbol-ester/DAG-type zinc-finger motif lies at 138-184 (THNFARKTFLKLAFCDICQKFLLNGFRCQTCGYKFHEHCSTKVPTMC). Residues His139, Cys152, Cys155, Cys165, Cys168, His173, Cys176, and Cys184 each coordinate Zn(2+). A disordered region spans residues 217-335 (MRESVSRMPA…EKNKIRPRGQ (119 aa)). Ser233 carries the post-translational modification Phosphoserine; by PKA. A compositionally biased stretch (polar residues) spans 239–271 (TFNTSSPSSEGSLSQRQRSTSTPNVHMVSTTLP). A phosphoserine mark is found at Ser252 and Ser259. Position 268 is a phosphothreonine; by autocatalysis (Thr268). The residue at position 269 (Thr269) is a Phosphothreonine; by PKA. Over residues 275 to 285 (RMIEDAIRSHS) the composition is skewed to basic and acidic residues. The segment covering 286–301 (ESASPSALSSSPNNLS) has biased composition (low complexity). Ser289, Ser296, and Ser301 each carry phosphoserine; by MAPK1. The tract at residues 331 to 349 (RPRGQRDSSYYWEIEASEV) is interaction with PEBP1/RKIP. Ser338 is subject to Phosphoserine; by PAK1, PAK2, PAK3 and PAK5. Phosphoserine; by PAK1, PAK2 and PAK3 is present on Ser339. Phosphotyrosine; by SRC is present on residues Tyr340 and Tyr341. Positions 349–609 (VMLSTRIGSG…PQILSSIELL (261 aa)) constitute a Protein kinase domain. ATP is bound by residues 355 to 363 (IGSGSFGTV) and Lys375. Asp468 (proton acceptor) is an active-site residue. Ser471 carries the phosphoserine modification. Thr491 is subject to Phosphothreonine. Phosphoserine is present on Ser494. Phosphoserine; by PKC is present on residues Ser497 and Ser499. Symmetric dimethylarginine; by PRMT5 is present on Arg563. Ser621 bears the Phosphoserine mark. A Phosphoserine; by MAPK1 modification is found at Ser642.

The protein belongs to the protein kinase superfamily. TKL Ser/Thr protein kinase family. RAF subfamily. As to quaternary structure, monomer. Homodimer. Heterodimerizes with BRAF and this heterodimer possesses a highly increased kinase activity compared to the respective homodimers or monomers. Heterodimerization is mitogen-regulated and enhanced by 14-3-3 proteins. MAPK1/ERK2 activation can induce a negative feedback that promotes the dissociation of the heterodimer. Forms a multiprotein complex with Ras (M-Ras/MRAS), SHOC2 and protein phosphatase 1 (PPP1CA, PPP1CB and PPP1CC). Interacts with LZTR1. Interacts with Ras proteins; the interaction is antagonized by RIN1. Weakly interacts with RIT1. Interacts with STK3/MST2; the interaction inhibits its pro-apoptotic activity. Interacts (when phosphorylated at Ser-259) with YWHAZ (unphosphorylated at 'Thr-232'). Interacts with MAP3K5/ASF1 (via N-terminus) and this interaction inhibits the proapoptotic function of MAP3K5/ASK1. Interacts with PAK1 (via kinase domain). The phosphorylated form interacts with PIN1. The Ser-338 and Ser-339 phosphorylated form (by PAK1) interacts with BCL2. Interacts with PEBP1/RKIP and this interaction is enhanced if RAF1 is phosphorylated on residues Ser-338, Ser-339, Tyr-340 and Tyr-341. Interacts with ADCY2, ADCY5, ADCY6, DGKH, RCAN1/DSCR1, PPP1R12A, PKB/AKT1, PPP2CA, PPP2R1B, SPRY2, SPRY4, CNKSR1/CNK1, KSR2 and PHB/prohibitin. Interacts with ROCK2. Interacts (via N-terminus) with RGS14 (via RBD domains); the interaction mediates the formation of a ternary complex with BRAF, a ternary complex inhibited by GNAI1. Probably forms a complex composed of chaperones HSP90 and HSP70, co-chaperones CDC37, PPP5C, TSC1 and client protein TSC2, CDK4, AKT, RAF1 and NR3C1; this complex does not contain co-chaperones STIP1/HOP and PTGES3/p23. Interacts with MAP2K1/MEK1 and MAP2K2/MEK2. In its active form, interacts with PRMT5. Interacts with FAM83B; displaces 14-3-3 proteins from RAF1 and activates RAF1. Interacts with PDE8A; the interaction promotes RAF1 activity. Interacts with MFHAS1. Interacts with GLS. Interacts with YWHAZ. Interacts with NEK10 and MAP2K1; the interaction is direct with NEK10 and required for ERK1/2-signaling pathway activation in response to UV irradiation. Zn(2+) serves as cofactor. Phosphorylation at Thr-269, Ser-338, Tyr-341, Thr-491 and Ser-494 results in its activation. Phosphorylation at Ser-29, Ser-43, Ser-289, Ser-296, Ser-301 and Ser-642 by MAPK1/ERK2 results in its inactivation. Phosphorylation at Ser-259 induces the interaction with YWHAZ and inactivates kinase activity. Dephosphorylation of Ser-259 by the SHOC2-MRAS-PP1c (SMP) complex consisting of SHOC2, GTP-bound M-Ras/MRAS and the catalytic subunit of protein phosphatase 1 (PPP1CA, PPP1CB or PPP1CC); this relieves inactivation and stimulates kinase activity. Phosphorylation at Ser-338 by PAK1 and PAK5 and Ser-339 by PAK1 is required for its mitochondrial localization. Phosphorylation at Ser-621 in response to growth factor treatment stabilizes the protein, possibly by preventing proteasomal degradation. Phosphorylation at Ser-289, Ser-296, Ser-301, Ser-338 and Ser-621 are somehow linked to the methylation potential of cells. Treatment of cells with HGF in the presence of the methylation inhibitor 5'-methylthioadenosine (MTA) results in increased phosphorylation at Ser-338 and Ser-621 and decreased phosphorylation at Ser-296, Ser-301 and Ser-338. Dephosphorylation at Ser-338 by PPP5C results in a decreased of activity. In terms of processing, methylated in response to EGF treatment. This modification leads to destabilization of the protein, possibly through proteasomal degradation.

It localises to the cytoplasm. The protein resides in the cell membrane. The protein localises to the mitochondrion. It is found in the nucleus. The enzyme catalyses L-seryl-[protein] + ATP = O-phospho-L-seryl-[protein] + ADP + H(+). It carries out the reaction L-threonyl-[protein] + ATP = O-phospho-L-threonyl-[protein] + ADP + H(+). Regulation is a highly complex process involving membrane recruitment, protein-protein interactions, dimerization, and phosphorylation/dephosphorylation events. Ras-GTP recruits RAF1 to the membrane, thereby promoting its activation. The inactive conformation of RAF1 is maintained by autoinhibitory interactions occurring between the N-terminal regulatory and the C-terminal catalytic domains and by the binding of a 14-3-3 protein that contacts two phosphorylation sites, Ser-259 and Ser-621. Upon mitogenic stimulation, Ras and PPP2R1A cooperate to release autoinhibition and the subsequent phosphorylation of activating sites: Ser-338, Tyr-341, Thr-491, and Ser-494, yields a fully active kinase. Through a negative feedback mechanism involving MAPK1/ERK2, RAF1 is phosphorylated on Ser-29, Ser-43, Ser-289, Ser-296, Ser-301 and Ser-642 by MAPK1/ERK2, which yields an inactive, desensitized kinase. The signaling-competent conformation of RAF1 is finally re-established by the coordinated action of PIN1, a prolyl isomerase that converts pSer and pThr residues from the cis to the trans conformation, which is preferentially recognized and dephosphorylated by PPP2R1A. Activated by homodimerization and heterodimerization (with BRAF). Also regulated through association with other proteins such as KSR2, CNKSR1/CNK1, PEBP1/RKIP, PHB/prohibitin and SPRY4. PEBP1/RKIP acts by dissociating RAF1 from its substrates MAP2K1/MEK1 and MAP2K2/MEK2. PHB/prohibitin facilitates the displacement of 14-3-3 from RAF1 by activated Ras, thereby promoting cell membrane localization and phosphorylation of RAF1 at the activating Ser-338. SPRY4 inhibits Ras-independent, but not Ras-dependent, activation of RAF1. CNKSR1/CNK1 regulates Src-mediated RAF1 activation. In terms of biological role, serine/threonine-protein kinase that acts as a regulatory link between the membrane-associated Ras GTPases and the MAPK/ERK cascade, and this critical regulatory link functions as a switch determining cell fate decisions including proliferation, differentiation, apoptosis, survival and oncogenic transformation. RAF1 activation initiates a mitogen-activated protein kinase (MAPK) cascade that comprises a sequential phosphorylation of the dual-specific MAPK kinases (MAP2K1/MEK1 and MAP2K2/MEK2) and the extracellular signal-regulated kinases (MAPK3/ERK1 and MAPK1/ERK2). The phosphorylated form of RAF1 (on residues Ser-338 and Ser-339, by PAK1) phosphorylates BAD/Bcl2-antagonist of cell death at 'Ser-75'. Phosphorylates adenylyl cyclases: ADCY2, ADCY5 and ADCY6, resulting in their activation. Phosphorylates PPP1R12A resulting in inhibition of the phosphatase activity. Can promote NF-kB activation and inhibit signal transducers involved in motility (ROCK2), apoptosis (MAP3K5/ASK1 and STK3/MST2), proliferation and angiogenesis (RB1). Can protect cells from apoptosis also by translocating to the mitochondria where it binds BCL2 and displaces BAD/Bcl2-antagonist of cell death. Regulates Rho signaling and migration, and is required for normal wound healing. Plays a role in the oncogenic transformation of epithelial cells via repression of the TJ protein, occludin (OCLN) by inducing the up-regulation of a transcriptional repressor SNAI2/SLUG, which induces down-regulation of OCLN. Restricts caspase activation in response to selected stimuli, notably Fas stimulation, pathogen-mediated macrophage apoptosis, and erythroid differentiation. Phosphorylates TNNT2/cardiac muscle troponin T. In Rattus norvegicus (Rat), this protein is RAF proto-oncogene serine/threonine-protein kinase (Raf1).